The sequence spans 425 residues: Gamma-glutamyl phosphate reductase (425 aa).

This sequence belongs to the gamma-glutamyl phosphate reductase family.

It localises to the cytoplasm. The catalysed reaction is L-glutamate 5-semialdehyde + phosphate + NADP(+) = L-glutamyl 5-phosphate + NADPH + H(+). It participates in amino-acid biosynthesis; L-proline biosynthesis; L-glutamate 5-semialdehyde from L-glutamate: step 2/2. Functionally, catalyzes the NADPH-dependent reduction of L-glutamate 5-phosphate into L-glutamate 5-semialdehyde and phosphate. The product spontaneously undergoes cyclization to form 1-pyrroline-5-carboxylate. The sequence is that of Gamma-glutamyl phosphate reductase from Symbiobacterium thermophilum (strain DSM 24528 / JCM 14929 / IAM 14863 / T).